The following is a 144-amino-acid chain: Large ribosomal subunit protein uL15 (144 aa).

Residues 1–51 (MELNSIKPGSGSKHAKRRVGRGIGSGLGKTAGRGHKGQKSRAGGYHKVGFE) form a disordered region. A compositionally biased stretch (gly residues) spans 21–31 (RGIGSGLGKTA).

It belongs to the universal ribosomal protein uL15 family. Part of the 50S ribosomal subunit.

Its function is as follows. Binds to the 23S rRNA. The protein is Large ribosomal subunit protein uL15 of Leptothrix cholodnii (strain ATCC 51168 / LMG 8142 / SP-6) (Leptothrix discophora (strain SP-6)).